The following is a 294-amino-acid chain: Protein C3orf33 (294 aa).

Position 2 is an N-acetylalanine (Ala-2). Residues 40–56 (ISTGMAIAGIMLLLRSI) traverse the membrane as a helical segment.

Highly expressed in ileocecal tissue and endometrium.

The protein resides in the membrane. It localises to the secreted. Its function is as follows. Secreted protein may play a role in transcription regulation via the MAPK3/MAPK1 pathway through an unidentified receptor on the plasma membrane. This Homo sapiens (Human) protein is Protein C3orf33 (C3orf33).